The primary structure comprises 290 residues: Beta-lactamase OXY-2 (290 aa).

The first 27 residues, 1–27 (MIKSSWRKIAMLAAAVPLLLASGALWA), serve as a signal peptide directing secretion. The active-site Acyl-ester intermediate is Ser-72. 236–238 (KTG) serves as a coordination point for substrate.

Belongs to the class-A beta-lactamase family.

The enzyme catalyses a beta-lactam + H2O = a substituted beta-amino acid. Hydrolyzes broad-spectrum beta-lactam antibiotics. Active against all third-generation cephalosporins but ceftazidime. The polypeptide is Beta-lactamase OXY-2 (bla) (Klebsiella oxytoca).